The chain runs to 487 residues: Cytochrome P450 716A75 (487 aa).

A helical membrane pass occupies residues 5–25 (FVSLLSLFLLILLPLSLLFLF). Cys434 contacts heme.

It belongs to the cytochrome P450 family. The cofactor is heme.

The protein resides in the membrane. It catalyses the reaction beta-amyrin + reduced [NADPH--hemoprotein reductase] + O2 = erythrodiol + oxidized [NADPH--hemoprotein reductase] + H2O + H(+). The enzyme catalyses erythrodiol + reduced [NADPH--hemoprotein reductase] + O2 = oleanolic aldehyde + oxidized [NADPH--hemoprotein reductase] + 2 H2O + H(+). It carries out the reaction oleanolic aldehyde + reduced [NADPH--hemoprotein reductase] + O2 = oleanolate + oxidized [NADPH--hemoprotein reductase] + H2O + 2 H(+). In terms of biological role, catalyzes the C-28 oxidation of beta-amyrin to form erythrodiol. Catalyzes the C-28 oxidation of erythrodiol to form oleanolic aldehyde. Catalyzes the C-28 oxidation of oleanolic aldehyde to form oleanolate. The chain is Cytochrome P450 716A75 from Maesa lanceolata (False assegai).